A 295-amino-acid polypeptide reads, in one-letter code: (R)-3-hydroxydecanoyl-ACP:CoA transacylase (295 aa).

The 227-residue stretch at 28 to 254 (NTIILINGSL…VIRDAGHFLD (227 aa)) folds into the AB hydrolase-1 domain.

It functions in the pathway polyester biosynthesis; polyhydroxyalkanoate biosynthesis. Functionally, catalyzes the transfer of the acyl moiety from in vitro synthesized 3-hydroxydecanoyl-CoA to acyl carrier protein. This is (R)-3-hydroxydecanoyl-ACP:CoA transacylase (phaG) from Pseudomonas putida (strain ATCC 47054 / DSM 6125 / CFBP 8728 / NCIMB 11950 / KT2440).